Consider the following 285-residue polypeptide: D-apionate oxidoisomerase (285 aa).

NAD(+) is bound by residues 15-17, Glu36, and Asp71; that span reads GKM. Positions 116 and 186 each coordinate Zn(2+).

Belongs to the ApnO family. The cofactor is Zn(2+).

The catalysed reaction is D-apionate + NAD(+) = 3-oxoisoapionate + NADH + H(+). It functions in the pathway carbohydrate metabolism. Functionally, involved in catabolism of D-apiose. Catalyzes the conversion of D-apionate to 3-oxo-isoapionate. The protein is D-apionate oxidoisomerase of Pectobacterium atrosepticum (strain SCRI 1043 / ATCC BAA-672) (Erwinia carotovora subsp. atroseptica).